The chain runs to 90 residues: Probable Fe(2+)-trafficking protein (90 aa).

The protein belongs to the Fe(2+)-trafficking protein family.

Its function is as follows. Could be a mediator in iron transactions between iron acquisition and iron-requiring processes, such as synthesis and/or repair of Fe-S clusters in biosynthetic enzymes. This chain is Probable Fe(2+)-trafficking protein, found in Pseudomonas entomophila (strain L48).